Reading from the N-terminus, the 280-residue chain is Cell envelope integrity protein EipB (280 aa).

The first 24 residues, 1–24, serve as a signal peptide directing secretion; that stretch reads MRFVRIAAAASGATVFMWAGFAGA. C69 and C278 are joined by a disulfide.

As to quaternary structure, monomer.

It is found in the periplasm. In terms of biological role, functions in the periplasm to maintain cell envelope integrity. This is Cell envelope integrity protein EipB from Brucella abortus (strain 2308).